The chain runs to 368 residues: tRNA(Met) cytidine acetate ligase (368 aa).

ATP-binding positions include 7-20 (IAEF…HKYL), Gly-96, Asn-152, and Arg-175.

The protein belongs to the TmcAL family.

It is found in the cytoplasm. It catalyses the reaction cytidine(34) in elongator tRNA(Met) + acetate + ATP = N(4)-acetylcytidine(34) in elongator tRNA(Met) + AMP + diphosphate. Catalyzes the formation of N(4)-acetylcytidine (ac(4)C) at the wobble position of elongator tRNA(Met), using acetate and ATP as substrates. First activates an acetate ion to form acetyladenylate (Ac-AMP) and then transfers the acetyl group to tRNA to form ac(4)C34. This Streptococcus pyogenes serotype M49 (strain NZ131) protein is tRNA(Met) cytidine acetate ligase.